The primary structure comprises 459 residues: tRNA modification GTPase MnmE (459 aa).

(6S)-5-formyl-5,6,7,8-tetrahydrofolate contacts are provided by arginine 30, glutamate 93, and lysine 132. In terms of domain architecture, TrmE-type G spans 226 to 381; that stretch reads GVTMAIVGKP…LEEKILESVK (156 aa). Residue asparagine 236 coordinates K(+). GTP-binding positions include 236-241, 255-261, and 280-283; these read NVGKST, TDIPGTT, and DTAG. Serine 240 serves as a coordination point for Mg(2+). Residues threonine 255, isoleucine 257, and threonine 260 each coordinate K(+). Threonine 261 provides a ligand contact to Mg(2+). Lysine 459 serves as a coordination point for (6S)-5-formyl-5,6,7,8-tetrahydrofolate.

This sequence belongs to the TRAFAC class TrmE-Era-EngA-EngB-Septin-like GTPase superfamily. TrmE GTPase family. As to quaternary structure, homodimer. Heterotetramer of two MnmE and two MnmG subunits. The cofactor is K(+).

It localises to the cytoplasm. In terms of biological role, exhibits a very high intrinsic GTPase hydrolysis rate. Involved in the addition of a carboxymethylaminomethyl (cmnm) group at the wobble position (U34) of certain tRNAs, forming tRNA-cmnm(5)s(2)U34. This chain is tRNA modification GTPase MnmE, found in Fervidobacterium nodosum (strain ATCC 35602 / DSM 5306 / Rt17-B1).